We begin with the raw amino-acid sequence, 321 residues long: Ornithine carbamoyltransferase (321 aa).

Carbamoyl phosphate is bound by residues 53 to 56, Gln-80, Arg-104, and 131 to 134; these read STRT and HPCQ. Residues Asn-166, Asp-230, and 234–235 each bind L-ornithine; that span reads SM. Residues 270 to 271 and Arg-298 each bind carbamoyl phosphate; that span reads CL.

The protein belongs to the aspartate/ornithine carbamoyltransferase superfamily. OTCase family.

The protein localises to the cytoplasm. It carries out the reaction carbamoyl phosphate + L-ornithine = L-citrulline + phosphate + H(+). The protein operates within amino-acid biosynthesis; L-arginine biosynthesis; L-arginine from L-ornithine and carbamoyl phosphate: step 1/3. Its function is as follows. Reversibly catalyzes the transfer of the carbamoyl group from carbamoyl phosphate (CP) to the N(epsilon) atom of ornithine (ORN) to produce L-citrulline. This chain is Ornithine carbamoyltransferase, found in Bifidobacterium longum (strain NCC 2705).